The sequence spans 122 residues: Large ribosomal subunit protein uL14 (122 aa).

It belongs to the universal ribosomal protein uL14 family. Part of the 50S ribosomal subunit. Forms a cluster with proteins L3 and L19. In the 70S ribosome, L14 and L19 interact and together make contacts with the 16S rRNA in bridges B5 and B8.

Its function is as follows. Binds to 23S rRNA. Forms part of two intersubunit bridges in the 70S ribosome. The protein is Large ribosomal subunit protein uL14 of Vesicomyosocius okutanii subsp. Calyptogena okutanii (strain HA).